Consider the following 106-residue polypeptide: Ribonuclease P protein component 4 (106 aa).

Zn(2+)-binding residues include C57, C60, C83, and C86.

The protein belongs to the eukaryotic/archaeal RNase P protein component 4 family. In terms of assembly, consists of a catalytic RNA component and at least 4-5 protein subunits. The cofactor is Zn(2+).

It localises to the cytoplasm. The catalysed reaction is Endonucleolytic cleavage of RNA, removing 5'-extranucleotides from tRNA precursor.. In terms of biological role, part of ribonuclease P, a protein complex that generates mature tRNA molecules by cleaving their 5'-ends. This is Ribonuclease P protein component 4 from Saccharolobus solfataricus (strain ATCC 35092 / DSM 1617 / JCM 11322 / P2) (Sulfolobus solfataricus).